A 109-amino-acid chain; its full sequence is uncharacterized protein (109 aa).

A helical transmembrane segment spans residues 63 to 85; sequence LFVKTFFACTYIIMLAFQVYIFL.

It is found in the membrane. This is an uncharacterized protein from Saccharomyces cerevisiae (strain ATCC 204508 / S288c) (Baker's yeast).